Consider the following 508-residue polypeptide: GMP synthase [glutamine-hydrolyzing] (508 aa).

In terms of domain architecture, Glutamine amidotransferase type-1 spans 1 to 189; that stretch reads MIVVLDFGSQ…ALLVCGCEKT (189 aa). The active-site Nucleophile is cysteine 78. Catalysis depends on residues histidine 163 and glutamate 165. Positions 190–383 constitute a GMPS ATP-PPase domain; it reads WGMQNFAQKE…LGVSQDFLMR (194 aa). ATP is bound at residue 217-223; the sequence is SGGVDST.

As to quaternary structure, homodimer.

The enzyme catalyses XMP + L-glutamine + ATP + H2O = GMP + L-glutamate + AMP + diphosphate + 2 H(+). The protein operates within purine metabolism; GMP biosynthesis; GMP from XMP (L-Gln route): step 1/1. Functionally, catalyzes the synthesis of GMP from XMP. The polypeptide is GMP synthase [glutamine-hydrolyzing] (Helicobacter acinonychis (strain Sheeba)).